An 894-amino-acid chain; its full sequence is Translation initiation factor IF-2 (894 aa).

The disordered stretch occupies residues 47 to 305 (AHLNRENGSG…GSALQQSFQK (259 aa)). The span at 68–82 (STLNIPGTGGKSKSV) shows a compositional bias: polar residues. Basic and acidic residues-rich tracts occupy residues 93–159 (VKRD…KDKV) and 166–219 (DMTK…KWTD). A compositionally biased stretch (basic residues) spans 254–269 (GRSRNAKAARPAKKGN). Basic and acidic residues predominate over residues 270 to 283 (KHSESKADREEARA). The tr-type G domain maps to 393-562 (PRAPVVTIMG…LLQAEVLELK (170 aa)). The interval 402–409 (GHVDHGKT) is G1. A GTP-binding site is contributed by 402 to 409 (GHVDHGKT). A G2 region spans residues 427–431 (GITQH). Positions 448–451 (DTPG) are G3. Residues 448–452 (DTPGH) and 502–505 (NKID) contribute to the GTP site. A G4 region spans residues 502-505 (NKID). The tract at residues 538 to 540 (SAK) is G5.

It belongs to the TRAFAC class translation factor GTPase superfamily. Classic translation factor GTPase family. IF-2 subfamily.

The protein localises to the cytoplasm. In terms of biological role, one of the essential components for the initiation of protein synthesis. Protects formylmethionyl-tRNA from spontaneous hydrolysis and promotes its binding to the 30S ribosomal subunits. Also involved in the hydrolysis of GTP during the formation of the 70S ribosomal complex. In Citrobacter koseri (strain ATCC BAA-895 / CDC 4225-83 / SGSC4696), this protein is Translation initiation factor IF-2.